A 424-amino-acid polypeptide reads, in one-letter code: CinA-like protein (424 aa).

It belongs to the CinA family.

The protein is CinA-like protein of Shewanella putrefaciens (strain CN-32 / ATCC BAA-453).